The following is an 800-amino-acid chain: Phenylalanine--tRNA ligase beta subunit (800 aa).

The 116-residue stretch at 39-154 (TKDIKNLVVG…EAQVPGTDAL (116 aa)) folds into the tRNA-binding domain. The region spanning 408-483 (AFITPIDITA…RIYGYDDIPS (76 aa)) is the B5 domain. Residues Asp461, Asp467, Glu470, and Glu471 each contribute to the Mg(2+) site. The FDX-ACB domain maps to 708-800 (PRFPGMSRDI…ALIEQGAVIR (93 aa)).

This sequence belongs to the phenylalanyl-tRNA synthetase beta subunit family. Type 1 subfamily. As to quaternary structure, tetramer of two alpha and two beta subunits. Mg(2+) serves as cofactor.

The protein resides in the cytoplasm. The catalysed reaction is tRNA(Phe) + L-phenylalanine + ATP = L-phenylalanyl-tRNA(Phe) + AMP + diphosphate + H(+). This is Phenylalanine--tRNA ligase beta subunit from Staphylococcus aureus (strain USA300).